Here is a 498-residue protein sequence, read N- to C-terminus: Glutathione synthetase large chain (498 aa).

Arg-128 contacts substrate. Glu-146 is a binding site for ATP. Glu-146 and Asn-148 together coordinate Mg(2+). Residues 150-153 (ISVS), 233-235 (ERN), Gln-239, and 291-294 (RVGY) contribute to the substrate site. Residue Lys-330 coordinates ATP. Ser-356 bears the Phosphoserine mark. Residues 387-396 (KPQREGGGNN), Tyr-398, 420-423 (MRYI), and Glu-446 each bind ATP. Glu-391 contacts Mg(2+). Arg-473 is a binding site for substrate. The ATP site is built by Lys-475 and Glu-481. 484 to 485 (VA) is a substrate binding site.

The protein belongs to the eukaryotic GSH synthase family. In terms of assembly, heterodimer composed of a large and a small chain. Mg(2+) serves as cofactor.

It catalyses the reaction gamma-L-glutamyl-L-cysteine + glycine + ATP = glutathione + ADP + phosphate + H(+). It functions in the pathway sulfur metabolism; glutathione biosynthesis; glutathione from L-cysteine and L-glutamate: step 2/2. This Schizosaccharomyces pombe (strain 972 / ATCC 24843) (Fission yeast) protein is Glutathione synthetase large chain (gsa1).